Here is a 655-residue protein sequence, read N- to C-terminus: FYVE, RhoGEF and PH domain-containing protein 2 (655 aa).

2 positions are modified to phosphoserine: S11 and S48. Residues 18–64 (VFENSRTPEAAPRGQRLEDVHHRPECRPPESPGPREKTNVGEAVGSE) form a disordered region. Residues 32–56 (QRLEDVHHRPECRPPESPGPREKTN) are compositionally biased toward basic and acidic residues. One can recognise a DH domain in the interval 102-290 (PEKKIVQELL…FSAAQHSNAA (189 aa)). The 100-residue stretch at 319-418 (TLLREGPVLK…WMQAFQAAID (100 aa)) folds into the PH 1 domain. Residues 458–518 (DKMVTMCMRC…VCLHCYAFLT (61 aa)) form an FYVE-type zinc finger. The Zn(2+) site is built by C464, C467, C481, C484, C489, C492, C510, and C513. The 98-residue stretch at 544 to 641 (QSLMCSFLQL…WVKAMERAAS (98 aa)) folds into the PH 2 domain. S654 bears the Phosphoserine mark.

Its subcellular location is the cytoplasm. The protein localises to the cytoskeleton. The protein resides in the nucleus. It is found in the early endosome. It localises to the early endosome membrane. Its subcellular location is the cell projection. The protein localises to the ruffle membrane. In terms of biological role, activates CDC42, a member of the Ras-like family of Rho- and Rac proteins, by exchanging bound GDP for free GTP. Activates JNK1 via CDC42 but not RAC1. Binds to phosphatidylinositol 4,5-bisphosphate, phosphatidylinositol 3,4,5-trisphosphate, phosphatidylinositol 5-monophosphate, phosphatidylinositol 4-monophosphate and phosphatidylinositol 3-monophosphate. The protein is FYVE, RhoGEF and PH domain-containing protein 2 (FGD2) of Homo sapiens (Human).